The primary structure comprises 607 residues: Dolichyl-diphosphooligosaccharide--protein glycosyltransferase subunit 1 (607 aa).

The first 23 residues, 1-23 (MEAPVARLFLLLLLGSWTPAPGS), serve as a signal peptide directing secretion. Over 24–434 (ASSEAPPLIN…VVHYTFNKVL (411 aa)) the chain is Lumenal. Lysine 187 is subject to N6-acetyllysine. N-linked (GlcNAc...) asparagine glycosylation occurs at asparagine 299. The helical transmembrane segment at 435 to 455 (MLQEPLLVVAAFYILFFTVII) threads the bilayer. The Cytoplasmic portion of the chain corresponds to 456–607 (YVRLDFSITK…TKIDHILDAL (152 aa)). Residue lysine 538 is modified to N6-acetyllysine; alternate. Lysine 538 participates in a covalent cross-link: Glycyl lysine isopeptide (Lys-Gly) (interchain with G-Cter in SUMO2); alternate.

The protein belongs to the OST1 family. Component of the oligosaccharyltransferase (OST) complex. OST exists in two different complex forms which contain common core subunits RPN1, RPN2, OST48, OST4, DAD1 and TMEM258, either STT3A or STT3B as catalytic subunits, and form-specific accessory subunits. STT3A complex assembly occurs through the formation of 3 subcomplexes. Subcomplex 1 contains RPN1 and TMEM258, subcomplex 2 contains the STT3A-specific subunits STT3A, DC2/OSTC, and KCP2 as well as the core subunit OST4, and subcomplex 3 contains RPN2, DAD1, and OST48. The STT3A complex can form stable complexes with the Sec61 complex or with both the Sec61 and TRAP complexes. Interacts with TMEM35A/NACHO. In terms of processing, ubiquitinated by the ECS(ASB11) complex. Ufmylated by UFL1 in response to endoplasmic reticulum stress, promoting reticulophagy of endoplasmic reticulum sheets.

It is found in the endoplasmic reticulum membrane. It participates in protein modification; protein glycosylation. Functionally, subunit of the oligosaccharyl transferase (OST) complex that catalyzes the initial transfer of a defined glycan (Glc(3)Man(9)GlcNAc(2) in eukaryotes) from the lipid carrier dolichol-pyrophosphate to an asparagine residue within an Asn-X-Ser/Thr consensus motif in nascent polypeptide chains, the first step in protein N-glycosylation. N-glycosylation occurs cotranslationally and the complex associates with the Sec61 complex at the channel-forming translocon complex that mediates protein translocation across the endoplasmic reticulum (ER). All subunits are required for a maximal enzyme activity. This is Dolichyl-diphosphooligosaccharide--protein glycosyltransferase subunit 1 from Macaca fascicularis (Crab-eating macaque).